The primary structure comprises 425 residues: UDP-N-acetylglucosamine 1-carboxyvinyltransferase (425 aa).

23-24 (KN) provides a ligand contact to phosphoenolpyruvate. Position 100 (Arg-100) interacts with UDP-N-acetyl-alpha-D-glucosamine. Cys-124 acts as the Proton donor in catalysis. The residue at position 124 (Cys-124) is a 2-(S-cysteinyl)pyruvic acid O-phosphothioketal. Residues 169 to 172 (KVSV), Asp-313, and Val-335 contribute to the UDP-N-acetyl-alpha-D-glucosamine site.

Belongs to the EPSP synthase family. MurA subfamily.

Its subcellular location is the cytoplasm. It carries out the reaction phosphoenolpyruvate + UDP-N-acetyl-alpha-D-glucosamine = UDP-N-acetyl-3-O-(1-carboxyvinyl)-alpha-D-glucosamine + phosphate. The protein operates within cell wall biogenesis; peptidoglycan biosynthesis. Functionally, cell wall formation. Adds enolpyruvyl to UDP-N-acetylglucosamine. This chain is UDP-N-acetylglucosamine 1-carboxyvinyltransferase, found in Wolbachia pipientis subsp. Culex pipiens (strain wPip).